The primary structure comprises 140 residues: T cell receptor alpha chain constant (140 aa).

An Ig-like C1-type domain is found at 19 to 107; it reads KSVCLFTDFD…LVEKSFETDT (89 aa). Cys22 and Cys72 are oxidised to a cystine. 4 N-linked (GlcNAc...) asparagine glycosylation sites follow: Asn32, Asn66, Asn77, and Asn113. Residues 94 to 115 are connecting peptide; sequence CDVKLVEKSFETDTNLNFQNLS. Residues 116-138 traverse the membrane as a helical segment; that stretch reads VIGFRILLLKVAGFNLLMTLRLW. Residues 139-140 lie on the Cytoplasmic side of the membrane; that stretch reads SS.

Alpha-beta TR is a heterodimer composed of an alpha and beta chain; disulfide-linked. The alpha-beta TR is associated with the transmembrane signaling CD3 coreceptor proteins to form the TR-CD3 (TcR or TCR). The assembly of alpha-beta TR heterodimers with CD3 occurs in the endoplasmic reticulum where a single alpha-beta TR heterodimer associates with one CD3D-CD3E heterodimer, one CD3G-CD3E heterodimer and one CD247 homodimer forming a stable octameric structure. CD3D-CD3E and CD3G-CD3E heterodimers preferentially associate with TR alpha and TR beta chains, respectively. The association of the CD247 homodimer is the last step of TcR assembly in the endoplasmic reticulum and is required for transport to the cell surface.

It localises to the cell membrane. In terms of biological role, constant region of T cell receptor (TR) alpha chain. Alpha-beta T cell receptors are antigen specific receptors which are essential to the immune response and are present on the cell surface of T lymphocytes. Recognize peptide-major histocompatibility (MH) (pMH) complexes that are displayed by antigen presenting cells (APC), a prerequisite for efficient T cell adaptive immunity against pathogens. Binding of alpha-beta TR to pMH complex initiates TR-CD3 clustering on the cell surface and intracellular activation of LCK that phosphorylates the ITAM motifs of CD3G, CD3D, CD3E and CD247 enabling the recruitment of ZAP70. In turn, ZAP70 phosphorylates LAT, which recruits numerous signaling molecules to form the LAT signalosome. The LAT signalosome propagates signal branching to three major signaling pathways, the calcium, the mitogen-activated protein kinase (MAPK) kinase and the nuclear factor NF-kappa-B (NF-kB) pathways, leading to the mobilization of transcription factors that are critical for gene expression and essential for T cell growth and differentiation. The T cell repertoire is generated in the thymus, by V-(D)-J rearrangement. This repertoire is then shaped by intrathymic selection events to generate a peripheral T cell pool of self-MH restricted, non-autoaggressive T cells. Post-thymic interaction of alpha-beta TR with the pMH complexes shapes TR structural and functional avidity. The sequence is that of T cell receptor alpha chain constant from Homo sapiens (Human).